Consider the following 965-residue polypeptide: Pullulanase 1, chloroplastic (965 aa).

The N-terminal 62 residues, 1-62 (MALTLTPTSS…SKTSLHCLCS (62 aa)), are a transit peptide targeting the chloroplast. The active-site Nucleophile is Asp-552. Glu-589 functions as the Proton donor in the catalytic mechanism.

It belongs to the glycosyl hydrolase 13 family.

The protein localises to the plastid. The protein resides in the chloroplast stroma. It carries out the reaction Hydrolysis of (1-&gt;6)-alpha-D-glucosidic linkages in alpha- and beta-limit dextrins of amylopectin and glycogen, and in amylopectin and pullulan.. It functions in the pathway glycan biosynthesis; starch biosynthesis. The protein operates within glycan degradation; starch degradation. In terms of biological role, involved in starch degradation and also probably in the trimming of pre-amylopectin chains during starch synthesis. This chain is Pullulanase 1, chloroplastic (PU1), found in Arabidopsis thaliana (Mouse-ear cress).